A 146-amino-acid polypeptide reads, in one-letter code: Hemoglobin subunit beta (146 aa).

Valine 1 carries the post-translational modification N-acetylvaline. The region spanning 2-146 (HLTGEEKAAV…VANALAHKYH (145 aa)) is the Globin domain. Threonine 12 carries the post-translational modification Phosphothreonine. Position 44 is a phosphoserine (serine 44). Residue lysine 59 is modified to N6-acetyllysine. Histidine 63 provides a ligand contact to heme b. N6-acetyllysine is present on lysine 82. Histidine 92 provides a ligand contact to heme b. Cysteine 93 is modified (S-nitrosocysteine). Lysine 144 carries the N6-acetyllysine modification.

It belongs to the globin family. As to quaternary structure, heterotetramer of two alpha chains and two beta chains. As to expression, red blood cells.

Functionally, involved in oxygen transport from the lung to the various peripheral tissues. The polypeptide is Hemoglobin subunit beta (HBB) (Lutra lutra (European river otter)).